Here is a 559-residue protein sequence, read N- to C-terminus: Probable D-2-hydroxyglutarate dehydrogenase, mitochondrial (559 aa).

A mitochondrion-targeting transit peptide spans 1 to 80 (MARRAAAGLL…MNFEVQKRSF (80 aa)). The 180-residue stretch at 131 to 310 (YKGSSQLLLL…TKIAILTPAK (180 aa)) folds into the FAD-binding PCMH-type domain.

The protein belongs to the FAD-binding oxidoreductase/transferase type 4 family. In terms of assembly, homodimer. FAD serves as cofactor.

Its subcellular location is the mitochondrion. The enzyme catalyses (R)-2-hydroxyglutarate + A = 2-oxoglutarate + AH2. In terms of biological role, catalyzes the oxidation of D-2-hydroxyglutarate to alpha-ketoglutarate. This chain is Probable D-2-hydroxyglutarate dehydrogenase, mitochondrial (D2HGDH), found in Oryza sativa subsp. japonica (Rice).